The primary structure comprises 258 residues: Imidazole glycerol phosphate synthase subunit HisF (258 aa).

Catalysis depends on residues aspartate 11 and aspartate 130.

The protein belongs to the HisA/HisF family. Heterodimer of HisH and HisF.

The protein resides in the cytoplasm. The enzyme catalyses 5-[(5-phospho-1-deoxy-D-ribulos-1-ylimino)methylamino]-1-(5-phospho-beta-D-ribosyl)imidazole-4-carboxamide + L-glutamine = D-erythro-1-(imidazol-4-yl)glycerol 3-phosphate + 5-amino-1-(5-phospho-beta-D-ribosyl)imidazole-4-carboxamide + L-glutamate + H(+). Its pathway is amino-acid biosynthesis; L-histidine biosynthesis; L-histidine from 5-phospho-alpha-D-ribose 1-diphosphate: step 5/9. Its function is as follows. IGPS catalyzes the conversion of PRFAR and glutamine to IGP, AICAR and glutamate. The HisF subunit catalyzes the cyclization activity that produces IGP and AICAR from PRFAR using the ammonia provided by the HisH subunit. This is Imidazole glycerol phosphate synthase subunit HisF from Enterobacter sp. (strain 638).